A 342-amino-acid polypeptide reads, in one-letter code: Nucleoid-associated protein Spea_1765 (342 aa).

The protein belongs to the YejK family.

The protein localises to the cytoplasm. It is found in the nucleoid. This chain is Nucleoid-associated protein Spea_1765, found in Shewanella pealeana (strain ATCC 700345 / ANG-SQ1).